The sequence spans 382 residues: uncharacterized protein (382 aa).

Helical transmembrane passes span 8–28, 41–61, 73–93, 94–114, 133–153, 157–177, 208–228, 235–255, 274–294, 295–315, 325–345, and 349–369; these read VLLL…LNTL, WQVG…TLIA, SYHY…LSVD, FWSW…IWVI, AAYM…LGVV, LLSV…PLLF, GCII…LYLS, ASVG…QWPI, VVIL…ALFI, LGCA…EKVS, ALLM…SLLM, and SDNL…MMLL.

This sequence belongs to the major facilitator superfamily. YcaD (TC 2.A.1.26) family.

Its subcellular location is the cell inner membrane. This is an uncharacterized protein from Yersinia enterocolitica serotype O:8 / biotype 1B (strain NCTC 13174 / 8081).